The chain runs to 708 residues: Nucleolar protein 11-like (708 aa).

The protein localises to the nucleus. The protein resides in the nucleolus. Its function is as follows. Ribosome biogenesis factor. May be required for both optimal rDNA transcription and pre-rRNA processing. The chain is Nucleolar protein 11-like (nol11) from Danio rerio (Zebrafish).